A 523-amino-acid polypeptide reads, in one-letter code: Apolipoprotein N-acyltransferase (523 aa).

The next 7 helical transmembrane spans lie at 26-46 (LRFA…AFAP), 49-66 (WWWL…LVRQ), 74-94 (AWVG…WLYI), 109-129 (AAVL…AWLW), 137-157 (QLSG…SEWL), 185-205 (LVGV…LCAA), and 212-232 (WLAG…HTIA). Residues 246 to 487 (LQGNVPQDVK…LGTLQADVQG (242 aa)) enclose the CN hydrolase domain. Glu284 functions as the Proton acceptor in the catalytic mechanism. Lys345 is a catalytic residue. Cys395 functions as the Nucleophile in the catalytic mechanism. The helical transmembrane segment at 494-514 (FVRTGNAPALGAGVLVLLAAL) threads the bilayer.

The protein belongs to the CN hydrolase family. Apolipoprotein N-acyltransferase subfamily.

It localises to the cell inner membrane. The enzyme catalyses N-terminal S-1,2-diacyl-sn-glyceryl-L-cysteinyl-[lipoprotein] + a glycerophospholipid = N-acyl-S-1,2-diacyl-sn-glyceryl-L-cysteinyl-[lipoprotein] + a 2-acyl-sn-glycero-3-phospholipid + H(+). Its pathway is protein modification; lipoprotein biosynthesis (N-acyl transfer). In terms of biological role, catalyzes the phospholipid dependent N-acylation of the N-terminal cysteine of apolipoprotein, the last step in lipoprotein maturation. This Ralstonia nicotianae (strain ATCC BAA-1114 / GMI1000) (Ralstonia solanacearum) protein is Apolipoprotein N-acyltransferase.